The chain runs to 360 residues: Peptide chain release factor 1 (360 aa).

Position 237 is an N5-methylglutamine (Gln-237).

It belongs to the prokaryotic/mitochondrial release factor family. Methylated by PrmC. Methylation increases the termination efficiency of RF1.

It is found in the cytoplasm. In terms of biological role, peptide chain release factor 1 directs the termination of translation in response to the peptide chain termination codons UAG and UAA. The protein is Peptide chain release factor 1 of Pseudomonas putida (strain GB-1).